The chain runs to 477 residues: Histone-lysine N-methyltransferase SUV39H2 (477 aa).

The tract at residues 1-59 is disordered; sequence MATARAKARGSEAGARCHRAPGPPPRPKARRTARRRRAETLTARRSRPSAGERRAGSQR. Over residues 27–37 the composition is skewed to basic residues; sequence PKARRTARRRR. The Chromo domain occupies 118–176; the sequence is YEVEYLCDYKVAKGVEYYLVKWKGWPDSTNTWEPLRNLRCPQLLRQFSDDKKTYLAQER. The Pre-SET domain maps to 256 to 314; sequence FGCSCTDCFFDKCCPAEAGVVLAYNKKQQIKIQPGTPIYECNSRCRCGPECPNRIVQKG. The Zn(2+) site is built by cysteine 258, cysteine 260, cysteine 263, cysteine 268, cysteine 269, cysteine 296, cysteine 300, cysteine 302, and cysteine 306. In terms of domain architecture, SET spans 317–440; it reads YSLCIFKTSN…AGEELTFDYQ (124 aa). S-adenosyl-L-methionine contacts are provided by residues 328 to 330, tyrosine 371, and 397 to 398; these read CGW and NH. Cysteine 400 lines the Zn(2+) pocket. 3 positions are modified to phosphoserine: serine 448, serine 451, and serine 455. Residues 461-477 form the Post-SET domain; the sequence is VRTQCKCGAETCRGYLN. Positions 465, 467, and 472 each coordinate Zn(2+).

It belongs to the class V-like SAM-binding methyltransferase superfamily. Histone-lysine methyltransferase family. Suvar3-9 subfamily. Interacts with SMAD5. The large PER complex involved in the histone methylation is composed of at least PER2, CBX3, TRIM28, SUV39H1 and/or SUV39H2; CBX3 mediates the formation of the complex. In terms of processing, ubiquitinated by the DCX(DCAF13) E3 ubiquitin ligase complex, leading to its degradation. Testis specific; predominant expression in type B spermatogonia and preleptotene spermatocytes.

It localises to the nucleus. It is found in the chromosome. The protein resides in the centromere. It catalyses the reaction L-lysyl(9)-[histone H3] + 3 S-adenosyl-L-methionine = N(6),N(6),N(6)-trimethyl-L-lysyl(9)-[histone H3] + 3 S-adenosyl-L-homocysteine + 3 H(+). Its function is as follows. Histone methyltransferase that specifically trimethylates 'Lys-9' of histone H3 using monomethylated H3 'Lys-9' as substrate. H3 'Lys-9' trimethylation represents a specific tag for epigenetic transcriptional repression by recruiting HP1 (CBX1, CBX3 and/or CBX5) proteins to methylated histones. Mainly functions in heterochromatin regions, thereby playing a central role in the establishment of constitutive heterochromatin at pericentric and telomere regions. H3 'Lys-9' trimethylation is also required to direct DNA methylation at pericentric repeats. SUV39H1 is targeted to histone H3 via its interaction with RB1 and is involved in many processes, such as cell cycle regulation, transcriptional repression and regulation of telomere length. May participate in regulation of higher-order chromatin organization during spermatogenesis. Recruited by the large PER complex to the E-box elements of the circadian target genes such as PER2 itself or PER1, contributes to the conversion of local chromatin to a heterochromatin-like repressive state through H3 'Lys-9' trimethylation. The polypeptide is Histone-lysine N-methyltransferase SUV39H2 (Suv39h2) (Mus musculus (Mouse)).